The primary structure comprises 120 residues: Alanine racemase (120 aa).

Tyrosine 24 functions as the Proton acceptor; specific for L-alanine in the catalytic mechanism.

It belongs to the alanine racemase family. In terms of assembly, homodimer. It depends on pyridoxal 5'-phosphate as a cofactor.

It catalyses the reaction L-alanine = D-alanine. Highly specific to D- and L-alanine and does not catalyze the racemization of other amino acids. In Penaeus monodon (Giant tiger prawn), this protein is Alanine racemase.